The chain runs to 126 residues: MPHFIVECSDNIREEADLPGLFAKVNPTLAATGIFPLAGIRSRVHWVDTWQMADGQHDYASVHMTLKIGAGRSLESRQQAGEMLFELIKTHFAALMESRLLALSFEIEELHPTLNFKQNNVHALFK.

Catalysis depends on Pro-2, which acts as the Proton acceptor; via imino nitrogen.

In terms of assembly, homotrimer.

It carries out the reaction (2E,4Z)-5-hydroxypenta-2,4-diene-1,2,5-tricarboxylate = (3E,5R)-5-carboxy-2-oxohept-3-enedioate. Its pathway is aromatic compound metabolism; 4-hydroxyphenylacetate degradation; pyruvate and succinate semialdehyde from 4-hydroxyphenylacetate: step 4/7. Transforms 5-carboxymethyl-2-hydroxy-muconic acid (CHM) into 5-oxo-pent-3-ene-1,2,5-tricarboxylic acid (OPET). This Escherichia coli protein is 5-carboxymethyl-2-hydroxymuconate Delta-isomerase (hpcD).